Here is a 428-residue protein sequence, read N- to C-terminus: MNIWKTLLLGMLVTGSAVSAPVELDKVAVIVNDGVILQSDIDTATKTLRANAKKSGQALPDADVLNEQIVDKLIIDTLQTQEADRIGVRIDDTRLNQAIEEIARNNNQTIDELSAAIASEGVSYAEFREQIRKEMAASEARNALVRRRINILPAEVDNLAELLSKETNASVEYRIGHIQLRFTDGQDKSALEAQAKELVEKLKQGADFSTMAYTYSKGPKALQGGDWGWMRKEEMPTIFADQIKMQNKGSIIGPFRSGVGFHILKIEDVKGLETVAVTEVNARHILLKPTVILSDEGAQRELNEFIRRIRAGEATFGELAQQYSQDPGSAAQDGELGYQTPDLYVPEFKHQVETLPVGTISEPFKTVHGWHIVEVLDRREVDRTDSAMKNKAYRILFNRKFNEEVGAWMQELRAGAFVEIINEEENDG.

An N-terminal signal peptide occupies residues Met-1–Ser-19. 2 consecutive PpiC domains span residues Ser-170–Asp-268 and Val-277–Asp-377.

Its subcellular location is the periplasm. The catalysed reaction is [protein]-peptidylproline (omega=180) = [protein]-peptidylproline (omega=0). Functionally, chaperone involved in the correct folding and assembly of outer membrane proteins. Recognizes specific patterns of aromatic residues and the orientation of their side chains, which are found more frequently in integral outer membrane proteins. May act in both early periplasmic and late outer membrane-associated steps of protein maturation. The chain is Chaperone SurA from Vibrio vulnificus (strain CMCP6).